We begin with the raw amino-acid sequence, 120 residues long: NAD(P)H-quinone oxidoreductase subunit 3, chloroplastic (120 aa).

Helical transmembrane passes span 9–29 (IFWA…LISG), 64–84 (MFAL…PWAM), and 88–108 (VLGV…IVGS).

Belongs to the complex I subunit 3 family. As to quaternary structure, NDH is composed of at least 16 different subunits, 5 of which are encoded in the nucleus.

The protein resides in the plastid. It localises to the chloroplast thylakoid membrane. The enzyme catalyses a plastoquinone + NADH + (n+1) H(+)(in) = a plastoquinol + NAD(+) + n H(+)(out). The catalysed reaction is a plastoquinone + NADPH + (n+1) H(+)(in) = a plastoquinol + NADP(+) + n H(+)(out). Its function is as follows. NDH shuttles electrons from NAD(P)H:plastoquinone, via FMN and iron-sulfur (Fe-S) centers, to quinones in the photosynthetic chain and possibly in a chloroplast respiratory chain. The immediate electron acceptor for the enzyme in this species is believed to be plastoquinone. Couples the redox reaction to proton translocation, and thus conserves the redox energy in a proton gradient. This chain is NAD(P)H-quinone oxidoreductase subunit 3, chloroplastic, found in Gossypium barbadense (Sea Island cotton).